A 507-amino-acid polypeptide reads, in one-letter code: ATP synthase subunit alpha, chloroplastic (507 aa).

170–177 lines the ATP pocket; sequence GDRQTGKT.

Belongs to the ATPase alpha/beta chains family. As to quaternary structure, F-type ATPases have 2 components, CF(1) - the catalytic core - and CF(0) - the membrane proton channel. CF(1) has five subunits: alpha(3), beta(3), gamma(1), delta(1), epsilon(1). CF(0) has four main subunits: a, b, b' and c.

It is found in the plastid. The protein resides in the chloroplast thylakoid membrane. The catalysed reaction is ATP + H2O + 4 H(+)(in) = ADP + phosphate + 5 H(+)(out). Its function is as follows. Produces ATP from ADP in the presence of a proton gradient across the membrane. The alpha chain is a regulatory subunit. This is ATP synthase subunit alpha, chloroplastic from Atropa belladonna (Belladonna).